Here is a 445-residue protein sequence, read N- to C-terminus: GTPase Der (445 aa).

2 consecutive EngA-type G domains span residues 3 to 167 (PVIA…YAGQ) and 180 to 353 (IKIA…AAAM). GTP contacts are provided by residues 9-16 (GRPNVGKS), 56-60 (DTGGF), 119-122 (NKAE), 186-193 (GRPNVGKS), 233-237 (DTAGL), and 298-301 (NKWD). In terms of domain architecture, KH-like spans 354–438 (AKLPTPKLTR…PLRIEFRSSN (85 aa)).

The protein belongs to the TRAFAC class TrmE-Era-EngA-EngB-Septin-like GTPase superfamily. EngA (Der) GTPase family. Associates with the 50S ribosomal subunit.

Functionally, GTPase that plays an essential role in the late steps of ribosome biogenesis. The polypeptide is GTPase Der (Burkholderia ambifaria (strain ATCC BAA-244 / DSM 16087 / CCUG 44356 / LMG 19182 / AMMD) (Burkholderia cepacia (strain AMMD))).